The chain runs to 316 residues: Biotin synthase (316 aa).

Residues 38–266 (YKGKKIELCA…DKDIRVCGGR (229 aa)) enclose the Radical SAM core domain. [4Fe-4S] cluster is bound by residues C56, C60, and C63. Residues S100, C131, C191, and R261 each coordinate [2Fe-2S] cluster.

Belongs to the radical SAM superfamily. Biotin synthase family. Homodimer. [4Fe-4S] cluster serves as cofactor. Requires [2Fe-2S] cluster as cofactor.

The enzyme catalyses (4R,5S)-dethiobiotin + (sulfur carrier)-SH + 2 reduced [2Fe-2S]-[ferredoxin] + 2 S-adenosyl-L-methionine = (sulfur carrier)-H + biotin + 2 5'-deoxyadenosine + 2 L-methionine + 2 oxidized [2Fe-2S]-[ferredoxin]. It functions in the pathway cofactor biosynthesis; biotin biosynthesis; biotin from 7,8-diaminononanoate: step 2/2. Functionally, catalyzes the conversion of dethiobiotin (DTB) to biotin by the insertion of a sulfur atom into dethiobiotin via a radical-based mechanism. This is Biotin synthase from Thermodesulfovibrio yellowstonii (strain ATCC 51303 / DSM 11347 / YP87).